The chain runs to 290 residues: Ribosomal RNA small subunit methyltransferase H (290 aa).

Residues 35–37, D54, F81, D97, and Q104 contribute to the S-adenosyl-L-methionine site; that span reads GGH.

Belongs to the methyltransferase superfamily. RsmH family.

It localises to the cytoplasm. The enzyme catalyses cytidine(1402) in 16S rRNA + S-adenosyl-L-methionine = N(4)-methylcytidine(1402) in 16S rRNA + S-adenosyl-L-homocysteine + H(+). In terms of biological role, specifically methylates the N4 position of cytidine in position 1402 (C1402) of 16S rRNA. The protein is Ribosomal RNA small subunit methyltransferase H of Picosynechococcus sp. (strain ATCC 27264 / PCC 7002 / PR-6) (Agmenellum quadruplicatum).